A 361-amino-acid polypeptide reads, in one-letter code: RLA class I histocompatibility antigen, alpha chain 11/11 (361 aa).

An N-terminal signal peptide occupies residues 1-24; it reads MGSMAPRTLLLLLAGALTLKDTQA. The segment at 25–114 is alpha-1; the sequence is GSHSMRYFYT…ALRYYNQSAA (90 aa). The Extracellular portion of the chain corresponds to 25 to 308; that stretch reads GSHSMRYFYT…EPPAQPTALI (284 aa). A glycan (N-linked (GlcNAc...) asparagine) is linked at Asn-110. An alpha-2 region spans residues 115–206; that stretch reads GSHTFQTMFG…EMGKETLQRA (92 aa). 2 disulfides stabilise this stretch: Cys-125-Cys-188 and Cys-227-Cys-283. The segment at 207–298 is alpha-3; it reads DPPKAHVTHH…GLPEPLTLTW (92 aa). The region spanning 209 to 297 is the Ig-like C1-type domain; it reads PKAHVTHHPA…EGLPEPLTLT (89 aa). The segment at 299–308 is connecting peptide; it reads EPPAQPTALI. A helical transmembrane segment spans residues 309–329; that stretch reads VGIVAGVLGVLLILGAVVAVV. Residues 330–361 lie on the Cytoplasmic side of the membrane; the sequence is RRKKHSSDGKGGRYTPAAGGHRDQGSDDSLMP. The tract at residues 335–361 is disordered; that stretch reads SSDGKGGRYTPAAGGHRDQGSDDSLMP. 2 positions are modified to phosphoserine: Ser-355 and Ser-358.

The protein belongs to the MHC class I family. Heterodimer of an alpha chain and a beta chain (beta-2-microglobulin).

It is found in the membrane. Involved in the presentation of foreign antigens to the immune system. In Oryctolagus cuniculus (Rabbit), this protein is RLA class I histocompatibility antigen, alpha chain 11/11.